A 177-amino-acid polypeptide reads, in one-letter code: MRFKVSKLMAYILRHSPWEFGLEPDEEGFVSIEELVNAVRKVYPWVTEEYIREIVERDEKGRYEIRGNKIRARYGHSYPVILRHEEDKESKVLYHGTVRRNLKGIMREGIKPMKRQYVHLSINYEDAYNTGRRHGEDVVVLIIDAECLRNKGYKILKAGKKVRIVKHVPVDCISGIL.

This sequence belongs to the KptA/TPT1 family.

Removes the 2'-phosphate from RNA via an intermediate in which the phosphate is ADP-ribosylated by NAD followed by a presumed transesterification to release the RNA and generate ADP-ribose 1''-2''-cyclic phosphate (APPR&gt;P). May function as an ADP-ribosylase. This Pyrococcus horikoshii (strain ATCC 700860 / DSM 12428 / JCM 9974 / NBRC 100139 / OT-3) protein is Probable RNA 2'-phosphotransferase (kptA).